A 143-amino-acid polypeptide reads, in one-letter code: Large ribosomal subunit protein uL11 (143 aa).

It belongs to the universal ribosomal protein uL11 family. As to quaternary structure, part of the ribosomal stalk of the 50S ribosomal subunit. Interacts with L10 and the large rRNA to form the base of the stalk. L10 forms an elongated spine to which L12 dimers bind in a sequential fashion forming a multimeric L10(L12)X complex. Post-translationally, one or more lysine residues are methylated.

In terms of biological role, forms part of the ribosomal stalk which helps the ribosome interact with GTP-bound translation factors. The polypeptide is Large ribosomal subunit protein uL11 (Nitrosospira multiformis (strain ATCC 25196 / NCIMB 11849 / C 71)).